Consider the following 129-residue polypeptide: Glycine cleavage system H protein (129 aa).

The region spanning 24–106 (TFTVGITEHA…FGDGWLFRIK (83 aa)) is the Lipoyl-binding domain. Lys-65 is subject to N6-lipoyllysine.

It belongs to the GcvH family. In terms of assembly, the glycine cleavage system is composed of four proteins: P, T, L and H. (R)-lipoate is required as a cofactor.

Its function is as follows. The glycine cleavage system catalyzes the degradation of glycine. The H protein shuttles the methylamine group of glycine from the P protein to the T protein. The sequence is that of Glycine cleavage system H protein from Pseudoalteromonas translucida (strain TAC 125).